The sequence spans 300 residues: Merozoite surface protein 2 (300 aa).

The first 20 residues, 1 to 20 (MKVIKTLSIINFFIFVTFNI), serve as a signal peptide directing secretion. N-linked (GlcNAc...) asparagine glycosylation is found at Asn-22 and Asn-36. A polymorphic region region spans residues 44–226 (EESKPPTGAV…EQTESPELQS (183 aa)). One copy of the 1; inverted repeat lies at 51–58 (GAVAGSGA). A 7 X 8 AA tandem repeats of G-S-G-A-G-A-V-A region spans residues 51–74 (GAVAGSGAGAGSGAGAVAGSGAGA). Repeat copies occupy residues 61-68 (GSGAGAVA), 69-76 (GSGAGAVA), 77-84 (GSGAGAVA), 85-92 (GSGAGAVA), and 93-100 (GSGAGAVA). A 7; inverted repeat occupies 103-110 (GAVAGSGA). Positions 111-261 (GNGANPGADA…DSQKECTDGN (151 aa)) are disordered. Over residues 124-148 (PSTPATTTTTTTTNDAEASTSTSSE) the composition is skewed to low complexity. The segment covering 149–165 (NRNHNNAETNPKGKGEV) has biased composition (basic and acidic residues). Composition is skewed to polar residues over residues 167–193 (KPNQ…NVPR) and 200–228 (KSPT…QSAP). N-linked (GlcNAc...) asparagine glycosylation is present at Asn-177. An N-linked (GlcNAc...) asparagine glycan is attached at Asn-249. A disulfide bridge links Cys-257 with Cys-265. 2 N-linked (GlcNAc...) asparagine glycosylation sites follow: Asn-273 and Asn-274. Asn-274 is lipidated: GPI-anchor amidated asparagine. The propeptide at 275–300 (SSNIASINKFVVLISATLVLSFAIFI) is removed in mature form.

The protein localises to the cell membrane. Functionally, may play a role in the merozoite attachment to the erythrocyte. The polypeptide is Merozoite surface protein 2 (Plasmodium falciparum (isolate mad71 / Papua New Guinea)).